We begin with the raw amino-acid sequence, 503 residues long: Probable DNA double-strand break repair helicase HerA (503 aa).

ATP contacts are provided by residues Arg122, 131–136 (GGGKSN), and 478–479 (KI).

It belongs to the HerA family.

It carries out the reaction Couples ATP hydrolysis with the unwinding of duplex DNA at the replication fork by translocating in the 5'-3' direction. This creates two antiparallel DNA single strands (ssDNA). The leading ssDNA polymer is the template for DNA polymerase III holoenzyme which synthesizes a continuous strand.. It catalyses the reaction ATP + H2O = ADP + phosphate + H(+). The enzyme catalyses Couples ATP hydrolysis with the unwinding of duplex DNA by translocating in the 3'-5' direction.. In terms of biological role, involved in DNA double-strand break (DSB) repair. Probably acts with NurA to stimulate resection of the 5' strand and produce the long 3' single-strand that is required for RadA loading. Has DNA-dependent ATPase activity and DNA helicase activity. The polypeptide is Probable DNA double-strand break repair helicase HerA (Methanocaldococcus jannaschii (strain ATCC 43067 / DSM 2661 / JAL-1 / JCM 10045 / NBRC 100440) (Methanococcus jannaschii)).